Consider the following 563-residue polypeptide: Adenine deaminase (563 aa).

It belongs to the metallo-dependent hydrolases superfamily. Adenine deaminase family. The cofactor is Mn(2+).

It carries out the reaction adenine + H2O + H(+) = hypoxanthine + NH4(+). The chain is Adenine deaminase from Brucella anthropi (strain ATCC 49188 / DSM 6882 / CCUG 24695 / JCM 21032 / LMG 3331 / NBRC 15819 / NCTC 12168 / Alc 37) (Ochrobactrum anthropi).